Here is a 280-residue protein sequence, read N- to C-terminus: Energy-coupling factor transporter ATP-binding protein EcfA2 (280 aa).

The 243-residue stretch at 3–245 (INLQNVSYTY…VSLLEKKQLG (243 aa)) folds into the ABC transporter domain. 40–47 (GHTGSGKS) lines the ATP pocket.

It belongs to the ABC transporter superfamily. Energy-coupling factor EcfA family. In terms of assembly, forms a stable energy-coupling factor (ECF) transporter complex composed of 2 membrane-embedded substrate-binding proteins (S component), 2 ATP-binding proteins (A component) and 2 transmembrane proteins (T component).

It is found in the cell membrane. ATP-binding (A) component of a common energy-coupling factor (ECF) ABC-transporter complex. Unlike classic ABC transporters this ECF transporter provides the energy necessary to transport a number of different substrates. The polypeptide is Energy-coupling factor transporter ATP-binding protein EcfA2 (Streptococcus pyogenes serotype M28 (strain MGAS6180)).